A 775-amino-acid chain; its full sequence is MGRQKTKVPEEPQDRLDTSLDPYPDTNYLAPCNKETVMVTLYGATNLPTCKDSSEPWPYVVVKTTSEEANNHSPQARTSVTSEPTRAPIWGDTVNVEIQAEDTGREDVTLKVMDSNKKEELVSYEIPIKYLRAFHPYHFELKKNEKEDEATAKTRLYATVVRKGSLLPRYIGYDHTALEVFLRGVNEPLVNNPSPMVVIARVVPSYTEFKARKARQDPASVGLPLTQVSFPISSPMTFDVPRVSQNGCPQLSKPGGPPEQPLWNQSFLFLGRDGATSFSEDTALVLEYYPSASMKSSEPWTLNQPLGVSVLPLKSHLYRKMLTGKGLKGLQVERLPIFDTNLKTINGEAPSVNLAFQLLSSERPENFLTPNNSKTLPTLNPKILDENLGAIRESWSVSSLDSSQEAEELQPRDVEMNNYRRAMQKMAEDILALRKQANILEEENRMLRSHLTQQSIEEEQNRAEEENLAVSMKQRLLLNELDMKRLRDRVQHLQNELIRKNDREKELLLLYQAQQPQAAQLRRYQDKLQKMKGLEDTVRHQEKVIEKMEQILEERLHERKEPAPSNRPQGKPIMDAFAPQASGIPLGPAGENLAMDLYSMLLAENTRLRTELEKNRQQSAPIILQQQALPVDPGELGAGGDLAERLQDTNGPGHSKYTETMPAQDFLGGTSDKFSLLAKLEQAQSRILSLENQLEESARHWAREKQNLAIRLQEQQHGFGQSPNSIIVDQPHFARSQGSTTPRQNLKDEGYPGNIERPLQTHLTPGTRDIRHHLR.

2 disordered regions span residues 1–23 and 68–87; these read MGRQ…LDPY and EANN…PTRA. Over residues 7-18 the composition is skewed to basic and acidic residues; sequence KVPEEPQDRLDT. Positions 12–141 constitute a C2 domain; sequence PQDRLDTSLD…RAFHPYHFEL (130 aa). Positions 71–84 are enriched in polar residues; sequence NHSPQARTSVTSEP. Coiled coils occupy residues 414–561 and 672–715; these read VEMN…ERKE and DKFS…LQEQ. The tract at residues 735-775 is disordered; the sequence is RSQGSTTPRQNLKDEGYPGNIERPLQTHLTPGTRDIRHHLR.

This Rattus norvegicus (Rat) protein is Coiled-coil domain-containing protein 33 (Ccdc33).